Reading from the N-terminus, the 389-residue chain is 26S proteasome non-ATPase regulatory subunit 6 (389 aa).

The region spanning 193 to 361 is the PCI domain; the sequence is DFKQAAELFL…EIVETNRPDS (169 aa).

The protein belongs to the proteasome subunit S10 family. As to quaternary structure, component of the 19S proteasome regulatory particle complex. The 26S proteasome consists of a 20S core particle (CP) and two 19S regulatory subunits (RP). The regulatory particle is made of a lid composed of 9 subunits including PSMD6, a base containing 6 ATPases and few additional components.

Component of the 26S proteasome, a multiprotein complex involved in the ATP-dependent degradation of ubiquitinated proteins. This complex plays a key role in the maintenance of protein homeostasis by removing misfolded or damaged proteins, which could impair cellular functions, and by removing proteins whose functions are no longer required. Therefore, the proteasome participates in numerous cellular processes, including cell cycle progression, apoptosis, or DNA damage repair. The protein is 26S proteasome non-ATPase regulatory subunit 6 (PSMD6) of Homo sapiens (Human).